Reading from the N-terminus, the 212-residue chain is F420-dependent NADP reductase (212 aa).

NADP(+) contacts are provided by residues 9 to 12 (TGNL), 31 to 32 (SR), K36, I72, H76, V98, and A137. Residue L207 coordinates coenzyme F420-(gamma-Glu)n.

The protein belongs to the F420-dependent NADP reductase family. In terms of assembly, homodimer.

The enzyme catalyses reduced coenzyme F420-(gamma-L-Glu)(n) + NADP(+) = oxidized coenzyme F420-(gamma-L-Glu)(n) + NADPH + 2 H(+). In terms of biological role, catalyzes the reversible reduction of NADP(+) by F420H(2). In this reaction the proS hydrogen at C5 of F420 is transferred into the proS position at C4 of NADPH. This is F420-dependent NADP reductase (fno) from Archaeoglobus fulgidus (strain ATCC 49558 / DSM 4304 / JCM 9628 / NBRC 100126 / VC-16).